Here is a 231-residue protein sequence, read N- to C-terminus: MIKDERWEGVYSFEDSPYLMETLTNLRNVSTENISFRKGLVRLGRYMGYELTKTMEFEEMHVQTPLEKTKGIFPKDRSNVVIITILRAAFPLMEGLIKNFESAKVGIVSASRGHAPDFKIEMNYIKVPQVTPEDTVIVSDPMIATGSTLIHVLKEFKDSKPKRMMIVGVLAAPEGINAVKAEFPDVEIFVTKIDDKLNNDGYIVPGLGDAGDRAFGEPFKVSMLPQMHNLE.

38–42 (KGLVR) serves as a coordination point for GTP. 5-phospho-alpha-D-ribose 1-diphosphate-binding positions include R87, R112, and 140 to 148 (DPMIATGST). Residues I203 and 208-210 (GDA) contribute to the uracil site. Residue D209 coordinates 5-phospho-alpha-D-ribose 1-diphosphate.

The protein belongs to the UPRTase family. Mg(2+) is required as a cofactor.

It catalyses the reaction UMP + diphosphate = 5-phospho-alpha-D-ribose 1-diphosphate + uracil. It functions in the pathway pyrimidine metabolism; UMP biosynthesis via salvage pathway; UMP from uracil: step 1/1. Allosterically activated by GTP. Functionally, catalyzes the conversion of uracil and 5-phospho-alpha-D-ribose 1-diphosphate (PRPP) to UMP and diphosphate. The chain is Uracil phosphoribosyltransferase from Methanococcus maripaludis (strain DSM 14266 / JCM 13030 / NBRC 101832 / S2 / LL).